The sequence spans 280 residues: Pantothenate synthetase (280 aa).

Position 30–37 (30–37 (MGYLHEGH)) interacts with ATP. Catalysis depends on histidine 37, which acts as the Proton donor. Glutamine 61 lines the (R)-pantoate pocket. Residue glutamine 61 participates in beta-alanine binding. Residue 147–150 (GQKD) coordinates ATP. Residue glutamine 153 participates in (R)-pantoate binding. ATP contacts are provided by residues valine 176 and 184 to 187 (MSSR).

This sequence belongs to the pantothenate synthetase family. Homodimer.

It is found in the cytoplasm. It catalyses the reaction (R)-pantoate + beta-alanine + ATP = (R)-pantothenate + AMP + diphosphate + H(+). The protein operates within cofactor biosynthesis; (R)-pantothenate biosynthesis; (R)-pantothenate from (R)-pantoate and beta-alanine: step 1/1. In terms of biological role, catalyzes the condensation of pantoate with beta-alanine in an ATP-dependent reaction via a pantoyl-adenylate intermediate. The chain is Pantothenate synthetase from Thermosipho melanesiensis (strain DSM 12029 / CIP 104789 / BI429).